The following is a 274-amino-acid chain: Probable cyclic nucleotide phosphodiesterase RPA0124 (274 aa).

Positions 8, 10, 49, 79, 155, 194, and 196 each coordinate Fe cation. Residues His10, Asp49, and 79–80 contribute to the AMP site; that span reads NH. His196 serves as a coordination point for AMP.

It belongs to the cyclic nucleotide phosphodiesterase class-III family. It depends on Fe(2+) as a cofactor.

In Rhodopseudomonas palustris (strain ATCC BAA-98 / CGA009), this protein is Probable cyclic nucleotide phosphodiesterase RPA0124.